Consider the following 557-residue polypeptide: Urocanate hydratase (557 aa).

Positions 1 to 20 (MSNPRHNEREVRSPRGDELN) are disordered. NAD(+) contacts are provided by residues 52–53 (GG), Gln-130, 176–178 (GMG), Glu-196, Arg-201, 242–243 (NA), 263–267 (QTSAH), 273–274 (YL), and Tyr-322. The active site involves Cys-410. Gly-492 is a binding site for NAD(+).

Belongs to the urocanase family. The cofactor is NAD(+).

It is found in the cytoplasm. It catalyses the reaction 4-imidazolone-5-propanoate = trans-urocanate + H2O. The protein operates within amino-acid degradation; L-histidine degradation into L-glutamate; N-formimidoyl-L-glutamate from L-histidine: step 2/3. Functionally, catalyzes the conversion of urocanate to 4-imidazolone-5-propionate. The chain is Urocanate hydratase from Brucella canis (strain ATCC 23365 / NCTC 10854 / RM-666).